We begin with the raw amino-acid sequence, 172 residues long: Adenine phosphoribosyltransferase (172 aa).

The protein belongs to the purine/pyrimidine phosphoribosyltransferase family. In terms of assembly, homodimer.

It is found in the cytoplasm. The catalysed reaction is AMP + diphosphate = 5-phospho-alpha-D-ribose 1-diphosphate + adenine. Its pathway is purine metabolism; AMP biosynthesis via salvage pathway; AMP from adenine: step 1/1. Functionally, catalyzes a salvage reaction resulting in the formation of AMP, that is energically less costly than de novo synthesis. The chain is Adenine phosphoribosyltransferase from Clostridium botulinum (strain Loch Maree / Type A3).